The primary structure comprises 29 residues: HSEGTFTSDYSKYLDNRRAKDFVQWLMNT.

Belongs to the glucagon family.

The protein localises to the secreted. Its function is as follows. Promotes hydrolysis of glycogen and lipids, and raises the blood sugar level. The polypeptide is Glucagon (gcg) (Torpedo marmorata (Marbled electric ray)).